A 139-amino-acid chain; its full sequence is Large ribosomal subunit protein uL16 (139 aa).

A compositionally biased stretch (basic residues) spans 1 to 20; the sequence is MLIPRRVKHRKQHHPKRRGM. The segment at 1–22 is disordered; that stretch reads MLIPRRVKHRKQHHPKRRGMAK.

The protein belongs to the universal ribosomal protein uL16 family. In terms of assembly, part of the 50S ribosomal subunit.

Functionally, binds 23S rRNA and is also seen to make contacts with the A and possibly P site tRNAs. The chain is Large ribosomal subunit protein uL16 from Streptomyces coelicolor (strain ATCC BAA-471 / A3(2) / M145).